Here is a 954-residue protein sequence, read N- to C-terminus: Bifunctional glutamine synthetase adenylyltransferase/adenylyl-removing enzyme (954 aa).

The tract at residues 1 to 452 is adenylyl removase; sequence MAVQKDSNKS…HFKATVGGEE (452 aa). Positions 458 to 954 are adenylyl transferase; the sequence is EHWTAQLWNV…ILAIYQAILE (497 aa).

It belongs to the GlnE family. Requires Mg(2+) as cofactor.

The catalysed reaction is [glutamine synthetase]-O(4)-(5'-adenylyl)-L-tyrosine + phosphate = [glutamine synthetase]-L-tyrosine + ADP. It catalyses the reaction [glutamine synthetase]-L-tyrosine + ATP = [glutamine synthetase]-O(4)-(5'-adenylyl)-L-tyrosine + diphosphate. Functionally, involved in the regulation of glutamine synthetase GlnA, a key enzyme in the process to assimilate ammonia. When cellular nitrogen levels are high, the C-terminal adenylyl transferase (AT) inactivates GlnA by covalent transfer of an adenylyl group from ATP to specific tyrosine residue of GlnA, thus reducing its activity. Conversely, when nitrogen levels are low, the N-terminal adenylyl removase (AR) activates GlnA by removing the adenylyl group by phosphorolysis, increasing its activity. The regulatory region of GlnE binds the signal transduction protein PII (GlnB) which indicates the nitrogen status of the cell. This Shewanella oneidensis (strain ATCC 700550 / JCM 31522 / CIP 106686 / LMG 19005 / NCIMB 14063 / MR-1) protein is Bifunctional glutamine synthetase adenylyltransferase/adenylyl-removing enzyme.